We begin with the raw amino-acid sequence, 505 residues long: Maturase K (505 aa).

It belongs to the intron maturase 2 family. MatK subfamily.

It localises to the plastid. It is found in the chloroplast. Usually encoded in the trnK tRNA gene intron. Probably assists in splicing its own and other chloroplast group II introns. The polypeptide is Maturase K (Idiospermum australiense (Ribbonwood tree)).